Here is an 878-residue protein sequence, read N- to C-terminus: Phosphoenolpyruvate carboxylase (878 aa).

Catalysis depends on residues histidine 140 and lysine 545.

This sequence belongs to the PEPCase type 1 family. Mg(2+) serves as cofactor.

It carries out the reaction oxaloacetate + phosphate = phosphoenolpyruvate + hydrogencarbonate. Forms oxaloacetate, a four-carbon dicarboxylic acid source for the tricarboxylic acid cycle. The protein is Phosphoenolpyruvate carboxylase of Ectopseudomonas mendocina (strain ymp) (Pseudomonas mendocina).